Here is a 30-residue protein sequence, read N- to C-terminus: Cytochrome b6/f complex 12.6 kDa peptide (30 aa).

Residues 1–30 (SGSGVRSAKKGGKAQGGQAGVGYKGSTEPG) are disordered. The span at 13–23 (KAQGGQAGVGY) shows a compositional bias: gly residues.

The protein localises to the plastid. The protein resides in the chloroplast. In terms of biological role, may be a component of the cytochrome b6/f complex which is part of the photosynthetic respiratory chain. This chain is Cytochrome b6/f complex 12.6 kDa peptide, found in Euglena gracilis.